Here is a 186-residue protein sequence, read N- to C-terminus: Cytochrome b6-f complex iron-sulfur subunit (186 aa).

Residues 16-38 traverse the membrane as a helical segment; the sequence is LLSFVTGGAIAATTAATLYPVVL. The 90-residue stretch at 74–163 folds into the Rieske domain; that stretch reads GEPVLTLGLD…ATVSDDKVLI (90 aa). 4 residues coordinate [2Fe-2S] cluster: Cys-109, His-111, Cys-127, and His-130. A disulfide bond links Cys-114 and Cys-129.

This sequence belongs to the Rieske iron-sulfur protein family. In terms of assembly, the 4 large subunits of the cytochrome b6-f complex are cytochrome b6, subunit IV (17 kDa polypeptide, PetD), cytochrome f and the Rieske protein, while the 4 small subunits are PetG, PetL, PetM and PetN. The complex functions as a dimer. The cofactor is [2Fe-2S] cluster.

The protein localises to the cell inner membrane. The catalysed reaction is 2 oxidized [plastocyanin] + a plastoquinol + 2 H(+)(in) = 2 reduced [plastocyanin] + a plastoquinone + 4 H(+)(out). Its function is as follows. Component of the cytochrome b6-f complex, which mediates electron transfer between photosystem II (PSII) and photosystem I (PSI), cyclic electron flow around PSI, and state transitions. The polypeptide is Cytochrome b6-f complex iron-sulfur subunit (Gloeobacter violaceus (strain ATCC 29082 / PCC 7421)).